The primary structure comprises 128 residues: Small ribosomal subunit protein uS12 (128 aa).

The segment at 1–30 (MPTINQLIRKGREPKERKSKSPALMGNPQK) is disordered. The residue at position 89 (aspartate 89) is a 3-methylthioaspartic acid. The interval 106–128 (GVEGRKQGRSKYGTKRPKEGGKK) is disordered.

Belongs to the universal ribosomal protein uS12 family. In terms of assembly, part of the 30S ribosomal subunit. Contacts proteins S8 and S17. May interact with IF1 in the 30S initiation complex.

In terms of biological role, with S4 and S5 plays an important role in translational accuracy. Its function is as follows. Interacts with and stabilizes bases of the 16S rRNA that are involved in tRNA selection in the A site and with the mRNA backbone. Located at the interface of the 30S and 50S subunits, it traverses the body of the 30S subunit contacting proteins on the other side and probably holding the rRNA structure together. The combined cluster of proteins S8, S12 and S17 appears to hold together the shoulder and platform of the 30S subunit. This chain is Small ribosomal subunit protein uS12, found in Dictyoglomus thermophilum (strain ATCC 35947 / DSM 3960 / H-6-12).